The primary structure comprises 131 residues: Large ribosomal subunit protein bL21 (131 aa).

The disordered stretch occupies residues 111–131 (VAAATGTADARRAAHNASAKE).

It belongs to the bacterial ribosomal protein bL21 family. Part of the 50S ribosomal subunit. Contacts protein L20.

Functionally, this protein binds to 23S rRNA in the presence of protein L20. The chain is Large ribosomal subunit protein bL21 from Cereibacter sphaeroides (strain ATCC 17029 / ATH 2.4.9) (Rhodobacter sphaeroides).